Consider the following 251-residue polypeptide: uncharacterized protein (251 aa).

This sequence belongs to the FAM243 family.

This is an uncharacterized protein from Homo sapiens (Human).